The chain runs to 352 residues: Anthranilate phosphoribosyltransferase (352 aa).

5-phospho-alpha-D-ribose 1-diphosphate contacts are provided by residues Gly-91, 94–95 (GD), Thr-99, 101–104 (NIST), 119–127 (KHGNRASSS), and Ser-131. Residue Gly-91 coordinates anthranilate. Residue Ser-103 coordinates Mg(2+). Asn-122 contacts anthranilate. Arg-177 serves as a coordination point for anthranilate. Mg(2+)-binding residues include Asp-235 and Glu-236.

The protein belongs to the anthranilate phosphoribosyltransferase family. In terms of assembly, homodimer. It depends on Mg(2+) as a cofactor.

The catalysed reaction is N-(5-phospho-beta-D-ribosyl)anthranilate + diphosphate = 5-phospho-alpha-D-ribose 1-diphosphate + anthranilate. Its pathway is amino-acid biosynthesis; L-tryptophan biosynthesis; L-tryptophan from chorismate: step 2/5. In terms of biological role, catalyzes the transfer of the phosphoribosyl group of 5-phosphorylribose-1-pyrophosphate (PRPP) to anthranilate to yield N-(5'-phosphoribosyl)-anthranilate (PRA). The protein is Anthranilate phosphoribosyltransferase of Arthrobacter sp. (strain FB24).